The following is a 413-amino-acid chain: Type II methyltransferase M.NaeI (413 aa).

Residues 4 to 317 (LEVVEICAGA…KRIRAALNME (314 aa)) enclose the SAM-dependent MTase C5-type domain. Cys78 is a catalytic residue.

It belongs to the class I-like SAM-binding methyltransferase superfamily. C5-methyltransferase family.

The catalysed reaction is a 2'-deoxycytidine in DNA + S-adenosyl-L-methionine = a 5-methyl-2'-deoxycytidine in DNA + S-adenosyl-L-homocysteine + H(+). In terms of biological role, a methylase that recognizes the double-stranded sequence 5'-GCCGGC-3', methylates C-? on both strands, and protects the DNA from cleavage by the NaeI endonuclease. The protein is Type II methyltransferase M.NaeI of Lentzea aerocolonigenes (Lechevalieria aerocolonigenes).